A 243-amino-acid chain; its full sequence is 1-(5-phosphoribosyl)-5-[(5-phosphoribosylamino)methylideneamino] imidazole-4-carboxamide isomerase (243 aa).

Residue D9 is the Proton acceptor of the active site. D131 serves as the catalytic Proton donor.

This sequence belongs to the HisA/HisF family.

It localises to the cytoplasm. The catalysed reaction is 1-(5-phospho-beta-D-ribosyl)-5-[(5-phospho-beta-D-ribosylamino)methylideneamino]imidazole-4-carboxamide = 5-[(5-phospho-1-deoxy-D-ribulos-1-ylimino)methylamino]-1-(5-phospho-beta-D-ribosyl)imidazole-4-carboxamide. The protein operates within amino-acid biosynthesis; L-histidine biosynthesis; L-histidine from 5-phospho-alpha-D-ribose 1-diphosphate: step 4/9. This is 1-(5-phosphoribosyl)-5-[(5-phosphoribosylamino)methylideneamino] imidazole-4-carboxamide isomerase from Campylobacter jejuni (strain RM1221).